The primary structure comprises 391 residues: Response regulator aspartate phosphatase I (391 aa).

TPR repeat units lie at residues 62 to 95 (LEFRHEIMLSYMKSKEIEDLNNAYETIKEIEKQG), 150 to 183 (SYVYYYMKQTYFSMNYANRALKIFREYEEYAVQT), 184 to 217 (VRCQFIVAGNLIDSLEYERALEQFLKSLEISKES), 224 to 257 (AMSHMNIGICYDELKEYKKASQHLILALEIFEKS), 275 to 311 (KQQNYNVALIYFRKGRFIADKSDDKEYSAKFKILEGL), and 338 to 371 (ENFSIEVADYFHEQGNLMLSNEYYRMSIEARRKI).

The protein belongs to the Rap family.

The protein localises to the cytoplasm. Inhibited by PhrI. Activates ICEBs1 gene expression, excision and transfer by inactivating the ICEBs1 repressor protein ImmR. RapI-mediated induction likely results from an increase in the specific activity of the protease ImmA, which mediates proteolysis of ImmR. In addition, is involved in regulation of sporulation. Acts as a phosphatase that specifically dephosphorylates the sporulation initiation phosphotransferase Spo0F and inhibits its activity. The sequence is that of Response regulator aspartate phosphatase I (rapI) from Bacillus subtilis (strain 168).